The sequence spans 335 residues: Ankyrin repeat and SOCS box protein 1 (335 aa).

ANK repeat units follow at residues 36 to 68 (CEDT…RINE), 77 to 106 (LPCT…EVDL), 110 to 139 (KGQT…DPNG), 143 to 172 (HRST…DVDV), 191 to 220 (LVVC…NPDF), and 235 to 265 (SPGC…NLNL). One can recognise an SOCS box domain in the interval 286–335 (LQVFKEARSVPRTLLCLCRVAVRRALGKHRLHLIPSLPLPDPIKKFLLHE).

It belongs to the ankyrin SOCS box (ASB) family. Interacts with CUL5 and RNF7. Interacts with TAB2 and TAB3.

Its subcellular location is the cytoplasm. It functions in the pathway protein modification; protein ubiquitination. Its function is as follows. Probable substrate-recognition component of a SCF-like ECS (Elongin-Cullin-SOCS-box protein) E3 ligase complex which mediates the ubiquitination and subsequent proteasomal degradation of target proteins. Mediates Notch-induced ubiquitination and degradation of TCF3/E2A and JAK2. Functions as a tumor suppressor by enhancing CHCHD3 'Lys-48'-linked ubiquitination, leading to inhibition of the CHCHD3/ROS signaling pathway. Suppresses TAB2-linked 'Lys-48' polyubiquitination and consequently facilitates the initiation of NF-kappa-B and MAPK signaling cascades. May play a role in testis development. The protein is Ankyrin repeat and SOCS box protein 1 (ASB1) of Homo sapiens (Human).